The sequence spans 193 residues: Holliday junction branch migration complex subunit RuvA (193 aa).

A domain I region spans residues 1–64; the sequence is MIGRIAGILL…EDAHLLYGFL (64 aa). The interval 65–139 is domain II; sequence TPQERTTFRE…GKLGADLGAL (75 aa). The segment at 139 to 143 is flexible linker; sequence LAGAA. Residues 144-193 are domain III; the sequence is SQSDHATDILNALVALGYSEKEGLAAIKNVPAGTGVSEGIKLALKALSKV.

The protein belongs to the RuvA family. Homotetramer. Forms an RuvA(8)-RuvB(12)-Holliday junction (HJ) complex. HJ DNA is sandwiched between 2 RuvA tetramers; dsDNA enters through RuvA and exits via RuvB. An RuvB hexamer assembles on each DNA strand where it exits the tetramer. Each RuvB hexamer is contacted by two RuvA subunits (via domain III) on 2 adjacent RuvB subunits; this complex drives branch migration. In the full resolvosome a probable DNA-RuvA(4)-RuvB(12)-RuvC(2) complex forms which resolves the HJ.

The protein localises to the cytoplasm. Its function is as follows. The RuvA-RuvB-RuvC complex processes Holliday junction (HJ) DNA during genetic recombination and DNA repair, while the RuvA-RuvB complex plays an important role in the rescue of blocked DNA replication forks via replication fork reversal (RFR). RuvA specifically binds to HJ cruciform DNA, conferring on it an open structure. The RuvB hexamer acts as an ATP-dependent pump, pulling dsDNA into and through the RuvAB complex. HJ branch migration allows RuvC to scan DNA until it finds its consensus sequence, where it cleaves and resolves the cruciform DNA. This is Holliday junction branch migration complex subunit RuvA from Burkholderia ambifaria (strain MC40-6).